We begin with the raw amino-acid sequence, 419 residues long: Tyrosine--tRNA ligase (419 aa).

Tyrosine 34 serves as a coordination point for L-tyrosine. The short motif at 39 to 48 (PSGDSMHIGH) is the 'HIGH' region element. Positions 168 and 172 each coordinate L-tyrosine. Positions 230–234 (KFGKS) match the 'KMSKS' region motif. ATP is bound at residue lysine 233. One can recognise an S4 RNA-binding domain in the interval 352–418 (VNLVDWLVTL…GKKKYFLVSY (67 aa)).

It belongs to the class-I aminoacyl-tRNA synthetase family. TyrS type 1 subfamily. Homodimer.

The protein localises to the cytoplasm. The catalysed reaction is tRNA(Tyr) + L-tyrosine + ATP = L-tyrosyl-tRNA(Tyr) + AMP + diphosphate + H(+). Its function is as follows. Catalyzes the attachment of tyrosine to tRNA(Tyr) in a two-step reaction: tyrosine is first activated by ATP to form Tyr-AMP and then transferred to the acceptor end of tRNA(Tyr). The chain is Tyrosine--tRNA ligase from Listeria innocua serovar 6a (strain ATCC BAA-680 / CLIP 11262).